We begin with the raw amino-acid sequence, 684 residues long: DNA ligase (684 aa).

Residues 48 to 52 (DYEYD), 97 to 98 (SL), and E129 contribute to the NAD(+) site. Catalysis depends on K131, which acts as the N6-AMP-lysine intermediate. NAD(+) contacts are provided by R152, E189, K310, and K334. Residues C429, C432, C447, and C452 each coordinate Zn(2+). The BRCT domain maps to 609–684 (AQEGSLSGMS…ISWEELQAMI (76 aa)).

The protein belongs to the NAD-dependent DNA ligase family. LigA subfamily. Requires Mg(2+) as cofactor. It depends on Mn(2+) as a cofactor.

The enzyme catalyses NAD(+) + (deoxyribonucleotide)n-3'-hydroxyl + 5'-phospho-(deoxyribonucleotide)m = (deoxyribonucleotide)n+m + AMP + beta-nicotinamide D-nucleotide.. Functionally, DNA ligase that catalyzes the formation of phosphodiester linkages between 5'-phosphoryl and 3'-hydroxyl groups in double-stranded DNA using NAD as a coenzyme and as the energy source for the reaction. It is essential for DNA replication and repair of damaged DNA. The protein is DNA ligase of Bdellovibrio bacteriovorus (strain ATCC 15356 / DSM 50701 / NCIMB 9529 / HD100).